The sequence spans 46 residues: Sperm protamine P1 (46 aa).

This sequence belongs to the protamine P1 family. In terms of tissue distribution, testis.

Its subcellular location is the nucleus. It localises to the chromosome. Its function is as follows. Protamines substitute for histones in the chromatin of sperm during the haploid phase of spermatogenesis. They compact sperm DNA into a highly condensed, stable and inactive complex. The sequence is that of Sperm protamine P1 (PRM1) from Hypsugo savii (Savi's pipistrelle).